The following is a 456-amino-acid chain: Chromosomal replication initiator protein DnaA (456 aa).

The tract at residues 1–85 (MDADLNKLWE…EIKFIIESDL (85 aa)) is domain I, interacts with DnaA modulators. Residues 85–117 (LNNEDELNNSDNSDKNRDKNSRRNIVVNDEMSS) are domain II. The tract at residues 118–334 (TLNPKYTFNS…GALIRIIAYS (217 aa)) is domain III, AAA+ region. Gly-162, Gly-164, Lys-165, and Thr-166 together coordinate ATP. The interval 335–456 (SLTNREVTVD…SDITKKVSQN (122 aa)) is domain IV, binds dsDNA.

It belongs to the DnaA family. As to quaternary structure, oligomerizes as a right-handed, spiral filament on DNA at oriC.

The protein resides in the cytoplasm. Functionally, plays an essential role in the initiation and regulation of chromosomal replication. ATP-DnaA binds to the origin of replication (oriC) to initiate formation of the DNA replication initiation complex once per cell cycle. Binds the DnaA box (a 9 base pair repeat at the origin) and separates the double-stranded (ds)DNA. Forms a right-handed helical filament on oriC DNA; dsDNA binds to the exterior of the filament while single-stranded (ss)DNA is stabiized in the filament's interior. The ATP-DnaA-oriC complex binds and stabilizes one strand of the AT-rich DNA unwinding element (DUE), permitting loading of DNA polymerase. After initiation quickly degrades to an ADP-DnaA complex that is not apt for DNA replication. Binds acidic phospholipids. This is Chromosomal replication initiator protein DnaA from Clostridium botulinum (strain Eklund 17B / Type B).